Reading from the N-terminus, the 582-residue chain is ATP-dependent lipid A-core flippase (582 aa).

Helical transmembrane passes span 26–46, 68–88, 140–160, 164–184, and 252–272; these read LIAA…LIYL, ILVM…SYCL, YVLV…AVMV, WQLS…ISIV, and GLVQ…ATFP. The 284-residue stretch at 27–310 folds into the ABC transmembrane type-1 domain; it reads IAASVALILN…LTSVNSQFQR (284 aa). An ABC transporter domain is found at 342–578; it reads ITFDNVIFSY…GGAYKQLYSM (237 aa). 376–383 contacts ATP; it reads GRSGSGKS.

This sequence belongs to the ABC transporter superfamily. Lipid exporter (TC 3.A.1.106) family. Homodimer.

Its subcellular location is the cell inner membrane. It catalyses the reaction ATP + H2O + lipid A-core oligosaccharideSide 1 = ADP + phosphate + lipid A-core oligosaccharideSide 2.. Functionally, involved in lipopolysaccharide (LPS) biosynthesis. Translocates lipid A-core from the inner to the outer leaflet of the inner membrane. Transmembrane domains (TMD) form a pore in the inner membrane and the ATP-binding domain (NBD) is responsible for energy generation. This chain is ATP-dependent lipid A-core flippase, found in Haemophilus ducreyi (strain 35000HP / ATCC 700724).